The following is a 310-amino-acid chain: UDP-N-acetylenolpyruvoylglucosamine reductase (310 aa).

Residues 23–188 (KVGGNAEIFF…LKAVFKVNKG (166 aa)) enclose the FAD-binding PCMH-type domain. Arg-168 is an active-site residue. The active-site Proton donor is Ser-217. Residue Glu-287 is part of the active site.

This sequence belongs to the MurB family. FAD serves as cofactor.

It is found in the cytoplasm. It carries out the reaction UDP-N-acetyl-alpha-D-muramate + NADP(+) = UDP-N-acetyl-3-O-(1-carboxyvinyl)-alpha-D-glucosamine + NADPH + H(+). It functions in the pathway cell wall biogenesis; peptidoglycan biosynthesis. Cell wall formation. This chain is UDP-N-acetylenolpyruvoylglucosamine reductase, found in Rickettsia bellii (strain OSU 85-389).